Here is a 292-residue protein sequence, read N- to C-terminus: 4-diphosphocytidyl-2-C-methyl-D-erythritol kinase (292 aa).

The active site involves lysine 20. An ATP-binding site is contributed by 103–113 (PMGGGIGGGSS). Aspartate 145 is an active-site residue.

The protein belongs to the GHMP kinase family. IspE subfamily.

It carries out the reaction 4-CDP-2-C-methyl-D-erythritol + ATP = 4-CDP-2-C-methyl-D-erythritol 2-phosphate + ADP + H(+). The protein operates within isoprenoid biosynthesis; isopentenyl diphosphate biosynthesis via DXP pathway; isopentenyl diphosphate from 1-deoxy-D-xylulose 5-phosphate: step 3/6. Catalyzes the phosphorylation of the position 2 hydroxy group of 4-diphosphocytidyl-2C-methyl-D-erythritol. The polypeptide is 4-diphosphocytidyl-2-C-methyl-D-erythritol kinase (Cupriavidus taiwanensis (strain DSM 17343 / BCRC 17206 / CCUG 44338 / CIP 107171 / LMG 19424 / R1) (Ralstonia taiwanensis (strain LMG 19424))).